The sequence spans 281 residues: MQVETLELQSEKNRKRLVEIVYKAKAGHIGGDLSCLNVLTALYFDIMRVWPDKPKETKRDRFVMSKGHCVEALYVTLEAKGFISREVTDTLGEFGSILSGHPTIEVPGIEVNTGALGHGLSVGVGMAMAAKMDKADYKTYVLMGDGEQGEGSIYEAAMAGNQYKLDNLVAIIDRNRLQISGTTEEVMSLESMRDRWTAFGWDVLEMNGDEMEDIIRTFRSIDYTNKKPHLLISHTTKGKGVSYMEGIAKWHHGVPTAEQYEEAVREVSERIEKLEKENNGK.

Belongs to the transketolase family. Probable heterodimer composed of AptA and AptB. Thiamine diphosphate is required as a cofactor.

The catalysed reaction is apulose 4-phosphate + D-glyceraldehyde 3-phosphate = D-xylulose 5-phosphate + dihydroxyacetone phosphate. It functions in the pathway carbohydrate metabolism. In terms of biological role, involved in catabolism of D-apiose. Catalyzes the transfer of the glycolaldehyde group from apulose-4-phosphate to D-glyceraldehyde 3-phosphate, generating dihydroxyacetone phosphate and D-xylulose-5-phosphate. This Phocaeicola vulgatus (strain ATCC 8482 / DSM 1447 / JCM 5826 / CCUG 4940 / NBRC 14291 / NCTC 11154) (Bacteroides vulgatus) protein is Apulose-4-phosphate transketolase subunit A.